The following is a 728-amino-acid chain: Phomopsene synthase (728 aa).

Residues 1-327 form a terpene cyclase region; it reads MEYRYSYVID…PRYHSDQSLD (327 aa). Residues Asp-94 and Asp-98 each contribute to the Mg(2+) site. Residues Asp-94, Asp-98, 181–184, Asn-226, 230–234, and 319–320 contribute to the substrate site; these read RIVD, SWEKE, and RY. A DDXXD 1 motif is present at residues 94–98; the sequence is DDLVD. Residues 226–234 carry the NSE/DTE motif; sequence NDVQSWEKE. The prenyltransferase stretch occupies residues 328–728; it reads EMMVARMKYG…FRFLLSLLKV (401 aa). Over residues 352 to 363 the composition is skewed to basic and acidic residues; the sequence is ENRGTKRTHQDD. Residues 352–379 are disordered; sequence ENRGTKRTHQDDTEGVQSVKRFNGASTK. A run of 3 repeats spans residues 381-386, 387-392, and 393-398. Residues 381–398 are 3 X 6 AA approximate tandem repeats; sequence GINGTNGINGLNGINGSN. 3 residues coordinate isopentenyl diphosphate: Lys-447, Arg-450, and His-479. Residues Asp-486 and Asp-490 each contribute to the Mg(2+) site. The short motif at 486-490 is the DDXXD 2 element; the sequence is DDVQD. Dimethylallyl diphosphate is bound at residue Arg-495. Arg-496 contributes to the isopentenyl diphosphate binding site. 6 residues coordinate dimethylallyl diphosphate: Lys-574, Thr-575, Gln-610, Asn-617, Lys-627, and Lys-637.

In the N-terminal section; belongs to the terpene synthase family. The protein in the C-terminal section; belongs to the FPP/GGPP synthase family. Hexamer. The cofactor is Mg(2+).

It catalyses the reaction isopentenyl diphosphate + (2E,6E)-farnesyl diphosphate = (2E,6E,10E)-geranylgeranyl diphosphate + diphosphate. Its pathway is secondary metabolite biosynthesis; terpenoid biosynthesis. Its function is as follows. Bifunctional terpene synthase; part of the gene cluster that mediates the biosynthesis of the diterpene methyl phomopsenonate. At first, the universal precursor of diterpene, geranylgeranyl diphosphate (GGPP) is provided and is cyclized by the unusual bifunctional terpene synthase PaPS to give phomopsene. The C-terminal prenyltransferase domain of PaPS catalyzes formation of GGPP, whereas the N-terminal terpene cyclase domain catalyzes the cyclization of GGPP to phomopsene. Since the oxidation of a methylgroup to a carboxyl group is frequently catalyzed by a cytochrome P450 monooxygenase, the C-16 methyl group would be oxidized by the cluster-specific cytochrome P450 monooxygenase ORF3. Subsequently, oxidation of the allylic position and methylation of the carboxyl group may give methyl phomopsenonate. Although further study is necessary to identify genes such as a monooxygenase and a methyltransferase, the predicted functions of genes on the cluster are correlated with the structure of methyl phomopsenonate. This Phomopsis amygdali (Fusicoccum amygdali) protein is Phomopsene synthase.